A 248-amino-acid polypeptide reads, in one-letter code: Ethylene-responsive transcription factor ERF026 (248 aa).

Positions 89 to 145 form a DNA-binding region, AP2/ERF; it reads VYRGIRCRSGKWVSEIREPKKTTRVWLGTYPTPEMAAAAYDVAALALKGGDTLLNFP. Positions 225–248 are disordered; that stretch reads PPWMGSPPSDDSPENSDGESLWSY.

Belongs to the AP2/ERF transcription factor family. ERF subfamily.

It localises to the nucleus. In terms of biological role, probably acts as a transcriptional activator. Binds to the GCC-box pathogenesis-related promoter element. May be involved in the regulation of gene expression by stress factors and by components of stress signal transduction pathways. In Arabidopsis thaliana (Mouse-ear cress), this protein is Ethylene-responsive transcription factor ERF026 (ERF026).